The primary structure comprises 406 residues: Corticosteroid-binding globulin (406 aa).

The N-terminal stretch at 1-22 (MPLLLYTCLLWLLSSGLWTVQA) is a signal peptide. Residues asparagine 31 and asparagine 96 are each glycosylated (N-linked (GlcNAc...) asparagine). Position 255 (glutamine 255) interacts with cortisol. Asparagine 261 carries N-linked (GlcNAc...) asparagine glycosylation. Aspartate 287 provides a ligand contact to cortisol. 2 N-linked (GlcNAc...) asparagine glycosylation sites follow: asparagine 331 and asparagine 360. Tryptophan 394 contacts cortisol.

This sequence belongs to the serpin family. In terms of tissue distribution, expressed by the liver; secreted in plasma.

The protein resides in the secreted. Its function is as follows. Major transport protein for glucocorticoids and progestins in the blood of almost all vertebrate species. The polypeptide is Corticosteroid-binding globulin (SERPINA6) (Saimiri sciureus (Common squirrel monkey)).